We begin with the raw amino-acid sequence, 303 residues long: MDALELKNIVSDGLLSFPVTDFDQNGDFNAASYAKRLEWLAPYGASALFAAGGTGEFFSLTGDEYSDVIKTAVDACKGSVPIIAGAGGPTRQAILQAQEAERLGAHGILLMPHYLTEASQEGLVEHVKQVCNAVNFGVIFYNRSVSKLNVDSLQQLVESCPNLIGFKDSSGQIDMMTEVVQTLGDRLSYLGGLPTAEIFAAPYKALGSPVYSSAVFNFIPKTAMEFYNALRNDDFATTQRLIRDFFLPLIKIRNRKSGYAVSMVKAGAKIVGHDAGPVRPPLSDLTPQDYEDLAALIATLGPQ.

It belongs to the DapA family.

The catalysed reaction is 5-dehydro-4-deoxy-D-glucarate + H(+) = 2,5-dioxopentanoate + CO2 + H2O. Its pathway is carbohydrate acid metabolism; D-glucarate degradation; 2,5-dioxopentanoate from D-glucarate: step 2/2. The chain is Probable 5-dehydro-4-deoxyglucarate dehydratase from Acinetobacter baylyi (strain ATCC 33305 / BD413 / ADP1).